The chain runs to 197 residues: Putative ankyrin repeat protein R875 (197 aa).

ANK repeat units lie at residues 78–106 (LNKCLIGYCISGRLDIVKYLVILGADIRE), 107–136 (NDDCVVRTACHNGHIEVVKYLVNQGADIRA), 138–166 (DDDAIRLASKNGHLYVVKYLVSQGVNFRK), and 168–196 (NDYEINWASQNGHGSVVDFLVSKGAVLHE).

The sequence is that of Putative ankyrin repeat protein R875 from Acanthamoeba polyphaga mimivirus (APMV).